The primary structure comprises 250 residues: Probable ABC transporter permease protein BAB2_1148 (250 aa).

A run of 6 helical transmembrane segments spans residues 12-32 (LLSFAVGIGGWYLLTATGAVV), 63-83 (VLSGFVLGVALAIPVGFLMGW), 94-114 (WVQFFRMIPPLAVIPLAIVTL), 122-142 (IFVIFLASFLSSVVATYQGVI), 172-192 (VPFILVGVRIGLGSAWATVVA), and 211-231 (LYYDLPTIFVSLVTIGILGLF). In terms of domain architecture, ABC transmembrane type-1 spans 56–236 (IFASLRRVLS…ILGLFMDRLL (181 aa)).

The protein belongs to the binding-protein-dependent transport system permease family. In terms of assembly, the complex is composed of two ATP-binding proteins (BAB2_1147), two transmembrane proteins (BAB2_1148) and a solute-binding protein (BAB2_1146).

The protein resides in the cell inner membrane. Its function is as follows. Probably part of an ABC transporter complex. Probably responsible for the translocation of the substrate across the membrane. The sequence is that of Probable ABC transporter permease protein BAB2_1148 from Brucella abortus (strain 2308).